Here is a 684-residue protein sequence, read N- to C-terminus: Ubinuclein-1 (684 aa).

Disordered regions lie at residues 108 to 137 (YKGN…FIDD), 157 to 287 (YVNR…LGKS), 311 to 332 (NVTG…VKSK), 609 to 631 (MVDR…CNPT), and 660 to 684 (PQTR…NLPS). Over residues 114–137 (SDGEELDGAPDDDEYDTEDSFIDD) the composition is skewed to acidic residues. Composition is skewed to basic and acidic residues over residues 157–167 (YVNRGKLERME) and 184–199 (SAKP…DKHT). A compositionally biased stretch (polar residues) spans 211–235 (STAPGSWKTQESPLPSGAQDANTSV). The span at 238–260 (DDVKHSDRANHQSRNDTSHKSRE) shows a compositional bias: basic and acidic residues. Polar residues-rich tracts occupy residues 261–284 (TGSS…TSLL), 311–321 (NVTGSRQSSQA), 611–631 (DRSN…CNPT), and 669–684 (QNLN…NLPS).

The protein belongs to the ubinuclein family. As to quaternary structure, component of the HIRA complex made of UBN1, UBN2, ASF1A, CABIN1 and HIRA. Interacts with HIRA.

Its subcellular location is the nucleus. It localises to the nucleolus. In terms of biological role, may be required for replication-independent chromatin assembly. The protein is Ubinuclein-1 of Arabidopsis thaliana (Mouse-ear cress).